A 512-amino-acid chain; its full sequence is MTDKLIIFDTTLRDGEQSPGASMTRDEKLRIARQLERLKVDVIEAGFAASSNGDFECVKAIAEVVKDSTICSLARANDRDISRAAEALKPANSGRLHLFLATSALHMEKKLRMTPDQVFEQARLSVRFARNLMADIEFSPEDGYRSDPDFLCRVIEAVINEGATTINVPDTVGYAIPELYGNFIRNLRERIPNSDKAVWSVHCHNDLGMAVANSLAGVKIGGARQVECTINGLGERAGNCSLEEVVMAVKTRKDYFGLDIGIDTQQILAASRLVSQTTGFVVQPNKAVVGANAFAHASGIHQDGVLKARDTYEIMRAEDVGWSANKIVLGKLSGRNAFKQRLQELGVAMESETDINNAFIKFKDLADRKSEIFDEDILALVSDESVTHSNEQYGFVSLSQHSETGERPQACVIFTVAGKEVKGESDGNGPVDASLKAIETHVKSGAEMVLYSVNAISGSTESQGEVTVRLQNSGRVVNGVGSDPDIVVASAKAYLSALNKLQSKADRVAAQG.

Residues 5–268 (LIIFDTTLRD…DIGIDTQQIL (264 aa)) form the Pyruvate carboxyltransferase domain. The Mn(2+) site is built by aspartate 14, histidine 202, histidine 204, and asparagine 239. The regulatory domain stretch occupies residues 394 to 512 (GFVSLSQHSE…SKADRVAAQG (119 aa)).

It belongs to the alpha-IPM synthase/homocitrate synthase family. LeuA type 1 subfamily. Homodimer. Mn(2+) serves as cofactor.

The protein resides in the cytoplasm. The catalysed reaction is 3-methyl-2-oxobutanoate + acetyl-CoA + H2O = (2S)-2-isopropylmalate + CoA + H(+). Its pathway is amino-acid biosynthesis; L-leucine biosynthesis; L-leucine from 3-methyl-2-oxobutanoate: step 1/4. Functionally, catalyzes the condensation of the acetyl group of acetyl-CoA with 3-methyl-2-oxobutanoate (2-ketoisovalerate) to form 3-carboxy-3-hydroxy-4-methylpentanoate (2-isopropylmalate). This is 2-isopropylmalate synthase from Polaromonas naphthalenivorans (strain CJ2).